The following is a 968-amino-acid chain: Phosphatidylserine decarboxylase 2 proenzyme (968 aa).

A signal peptide spans 1–25; it reads MAKVMRLIIFVCVALVAISVPAASS. Residues Asp500, His570, and Ser683 each act as charge relay system; for autoendoproteolytic cleavage activity in the active site. Ser683 serves as the catalytic Schiff-base intermediate with substrate; via pyruvic acid; for decarboxylase activity. A Pyruvic acid (Ser); by autocatalysis modification is found at Ser683.

This sequence belongs to the phosphatidylserine decarboxylase family. As to quaternary structure, heterodimer of a large membrane-associated beta subunit and a small pyruvoyl-containing alpha subunit. Pyruvate is required as a cofactor. Is synthesized initially as an inactive proenzyme. Formation of the active enzyme involves a self-maturation process in which the active site pyruvoyl group is generated from an internal serine residue via an autocatalytic post-translational modification. Two non-identical subunits are generated from the proenzyme in this reaction, and the pyruvate is formed at the N-terminus of the alpha chain, which is derived from the carboxyl end of the proenzyme. The autoendoproteolytic cleavage occurs by a canonical serine protease mechanism, in which the side chain hydroxyl group of the serine supplies its oxygen atom to form the C-terminus of the beta chain, while the remainder of the serine residue undergoes an oxidative deamination to produce ammonia and the pyruvoyl prosthetic group on the alpha chain. During this reaction, the Ser that is part of the protease active site of the proenzyme becomes the pyruvoyl prosthetic group, which constitutes an essential element of the active site of the mature decarboxylase.

It localises to the parasitophorous vacuole. Its subcellular location is the cytoplasmic vesicle. It is found in the secretory vesicle. The catalysed reaction is a 1,2-diacyl-sn-glycero-3-phospho-L-serine + H(+) = a 1,2-diacyl-sn-glycero-3-phosphoethanolamine + CO2. It participates in phospholipid metabolism; phosphatidylethanolamine biosynthesis; phosphatidylethanolamine from CDP-diacylglycerol: step 2/2. Its function is as follows. Catalyzes the formation of phosphatidylethanolamine (PtdEtn) from phosphatidylserine (PtdSer). Plays a central role in phospholipid metabolism and in the interorganelle trafficking of phosphatidylserine. Can act on liposomal and host cell PtdSer. This chain is Phosphatidylserine decarboxylase 2 proenzyme, found in Toxoplasma gondii (strain ATCC 50853 / GT1).